The primary structure comprises 229 residues: Adenine nucleotide translocase lysine N-methyltransferase (229 aa).

An N-terminal sequence (NTS) region spans residues 1 to 22 (MDQDDPAEALTELREKRLGLLE). Residues 20 to 42 (LLEIVQAAAGSGLAVYTIWALLL) form a helical membrane-spanning segment. The segment at 43-77 (QPGFRRVPLRLQVPYVGASARQVENVLSLLRGRPG) is methyltransferase (MTase). A pre-methyltransferase (preMT) region spans residues 43 to 77 (QPGFRRVPLRLQVPYVGASARQVENVLSLLRGRPG).

The protein belongs to the ANT/ATPSC lysine N-methyltransferase family.

It localises to the mitochondrion membrane. It carries out the reaction L-lysyl-[protein] + 3 S-adenosyl-L-methionine = N(6),N(6),N(6)-trimethyl-L-lysyl-[protein] + 3 S-adenosyl-L-homocysteine + 3 H(+). Its function is as follows. Mitochondrial protein-lysine N-methyltransferase that trimethylates adenine nucleotide translocases ANT2/SLC25A5 and ANT3/SLC25A6, thereby regulating mitochondrial respiration. Probably also trimethylates ANT1/SLC25A4. The polypeptide is Adenine nucleotide translocase lysine N-methyltransferase (Mus musculus (Mouse)).